The primary structure comprises 282 residues: Pantothenate synthetase (282 aa).

An ATP-binding site is contributed by Met30 to His37. His37 functions as the Proton donor in the catalytic mechanism. Gln61 is a (R)-pantoate binding site. Gln61 contacts beta-alanine. Gly147–Asp150 provides a ligand contact to ATP. Gln153 is a (R)-pantoate binding site. Residues Val176 and Lys184 to Arg187 contribute to the ATP site.

The protein belongs to the pantothenate synthetase family. Homodimer.

The protein localises to the cytoplasm. The catalysed reaction is (R)-pantoate + beta-alanine + ATP = (R)-pantothenate + AMP + diphosphate + H(+). The protein operates within cofactor biosynthesis; (R)-pantothenate biosynthesis; (R)-pantothenate from (R)-pantoate and beta-alanine: step 1/1. In terms of biological role, catalyzes the condensation of pantoate with beta-alanine in an ATP-dependent reaction via a pantoyl-adenylate intermediate. This is Pantothenate synthetase from Bacillus mycoides (strain KBAB4) (Bacillus weihenstephanensis).